Consider the following 151-residue polypeptide: MTELKEQLSLLGRKTEYKQDYAPEVLEAFDNKHPENDYWVRFNCPEFTSLCPITGQPDFAEIRISYLPDVKMVESKSLKLYLFSFRNHGAFHEDCVNIIMKDLIRLMDPKYIEVTGIFTPRGGISIYPYANYGRPGTKYEEMATHRLMNHE.

Catalysis depends on C51, which acts as the Thioimide intermediate. D58 serves as the catalytic Proton donor. Substrate is bound by residues 73-75 (VES) and 92-93 (HE).

The protein belongs to the GTP cyclohydrolase I family. QueF type 1 subfamily.

Its subcellular location is the cytoplasm. The catalysed reaction is 7-aminomethyl-7-carbaguanine + 2 NADP(+) = 7-cyano-7-deazaguanine + 2 NADPH + 3 H(+). It participates in tRNA modification; tRNA-queuosine biosynthesis. Its function is as follows. Catalyzes the NADPH-dependent reduction of 7-cyano-7-deazaguanine (preQ0) to 7-aminomethyl-7-deazaguanine (preQ1). In Bacteroides fragilis (strain YCH46), this protein is NADPH-dependent 7-cyano-7-deazaguanine reductase.